The primary structure comprises 344 residues: Holliday junction branch migration complex subunit RuvB (344 aa).

The large ATPase domain (RuvB-L) stretch occupies residues 1–182 (MRIELLNTPV…FGISNRFDYY (182 aa)). ATP contacts are provided by residues I21, R22, G63, K66, T67, T68, 129–131 (EDF), R172, Y182, and R219. T67 provides a ligand contact to Mg(2+). Residues 183 to 253 (PPELLETILM…TAMKTLDSLE (71 aa)) form a small ATPAse domain (RuvB-S) region. Positions 256–344 (EEGLDEMDKK…GTLFDGQEHV (89 aa)) are head domain (RuvB-H). R311 and R316 together coordinate DNA.

It belongs to the RuvB family. As to quaternary structure, homohexamer. Forms an RuvA(8)-RuvB(12)-Holliday junction (HJ) complex. HJ DNA is sandwiched between 2 RuvA tetramers; dsDNA enters through RuvA and exits via RuvB. An RuvB hexamer assembles on each DNA strand where it exits the tetramer. Each RuvB hexamer is contacted by two RuvA subunits (via domain III) on 2 adjacent RuvB subunits; this complex drives branch migration. In the full resolvosome a probable DNA-RuvA(4)-RuvB(12)-RuvC(2) complex forms which resolves the HJ.

It localises to the cytoplasm. The catalysed reaction is ATP + H2O = ADP + phosphate + H(+). Its function is as follows. The RuvA-RuvB-RuvC complex processes Holliday junction (HJ) DNA during genetic recombination and DNA repair, while the RuvA-RuvB complex plays an important role in the rescue of blocked DNA replication forks via replication fork reversal (RFR). RuvA specifically binds to HJ cruciform DNA, conferring on it an open structure. The RuvB hexamer acts as an ATP-dependent pump, pulling dsDNA into and through the RuvAB complex. RuvB forms 2 homohexamers on either side of HJ DNA bound by 1 or 2 RuvA tetramers; 4 subunits per hexamer contact DNA at a time. Coordinated motions by a converter formed by DNA-disengaged RuvB subunits stimulates ATP hydrolysis and nucleotide exchange. Immobilization of the converter enables RuvB to convert the ATP-contained energy into a lever motion, pulling 2 nucleotides of DNA out of the RuvA tetramer per ATP hydrolyzed, thus driving DNA branch migration. The RuvB motors rotate together with the DNA substrate, which together with the progressing nucleotide cycle form the mechanistic basis for DNA recombination by continuous HJ branch migration. Branch migration allows RuvC to scan DNA until it finds its consensus sequence, where it cleaves and resolves cruciform DNA. This chain is Holliday junction branch migration complex subunit RuvB, found in Chlorobium luteolum (strain DSM 273 / BCRC 81028 / 2530) (Pelodictyon luteolum).